A 323-amino-acid chain; its full sequence is tRNA dimethylallyltransferase (323 aa).

12 to 19 (GPTAAGKT) provides a ligand contact to ATP. Residue 14–19 (TAAGKT) participates in substrate binding. 2 interaction with substrate tRNA regions span residues 37-40 (DSAL) and 161-165 (QRLIR).

It belongs to the IPP transferase family. In terms of assembly, monomer. Mg(2+) serves as cofactor.

It catalyses the reaction adenosine(37) in tRNA + dimethylallyl diphosphate = N(6)-dimethylallyladenosine(37) in tRNA + diphosphate. In terms of biological role, catalyzes the transfer of a dimethylallyl group onto the adenine at position 37 in tRNAs that read codons beginning with uridine, leading to the formation of N6-(dimethylallyl)adenosine (i(6)A). This is tRNA dimethylallyltransferase from Pseudomonas syringae pv. syringae (strain B728a).